Here is a 600-residue protein sequence, read N- to C-terminus: Dihydroxy-acid dehydratase (600 aa).

Position 82 (Asp-82) interacts with Mg(2+). Position 123 (Cys-123) interacts with [2Fe-2S] cluster. Mg(2+)-binding residues include Asp-124 and Lys-125. Position 125 is an N6-carboxylysine (Lys-125). Residue Cys-192 coordinates [2Fe-2S] cluster. Glu-489 contacts Mg(2+). Ser-515 (proton acceptor) is an active-site residue.

The protein belongs to the IlvD/Edd family. Homodimer. Requires [2Fe-2S] cluster as cofactor. Mg(2+) is required as a cofactor.

The enzyme catalyses (2R)-2,3-dihydroxy-3-methylbutanoate = 3-methyl-2-oxobutanoate + H2O. It catalyses the reaction (2R,3R)-2,3-dihydroxy-3-methylpentanoate = (S)-3-methyl-2-oxopentanoate + H2O. The protein operates within amino-acid biosynthesis; L-isoleucine biosynthesis; L-isoleucine from 2-oxobutanoate: step 3/4. It participates in amino-acid biosynthesis; L-valine biosynthesis; L-valine from pyruvate: step 3/4. Functionally, functions in the biosynthesis of branched-chain amino acids. Catalyzes the dehydration of (2R,3R)-2,3-dihydroxy-3-methylpentanoate (2,3-dihydroxy-3-methylvalerate) into 2-oxo-3-methylpentanoate (2-oxo-3-methylvalerate) and of (2R)-2,3-dihydroxy-3-methylbutanoate (2,3-dihydroxyisovalerate) into 2-oxo-3-methylbutanoate (2-oxoisovalerate), the penultimate precursor to L-isoleucine and L-valine, respectively. The sequence is that of Dihydroxy-acid dehydratase from Bacteroides thetaiotaomicron (strain ATCC 29148 / DSM 2079 / JCM 5827 / CCUG 10774 / NCTC 10582 / VPI-5482 / E50).